The primary structure comprises 425 residues: uncharacterized protein (425 aa).

This is an uncharacterized protein from Salmonella typhimurium (strain LT2 / SGSC1412 / ATCC 700720).